Reading from the N-terminus, the 374-residue chain is Probable trehalose-phosphate phosphatase 9 (374 aa).

Belongs to the trehalose phosphatase family. The cofactor is a divalent metal cation.

The catalysed reaction is alpha,alpha-trehalose 6-phosphate + H2O = alpha,alpha-trehalose + phosphate. Its pathway is glycan biosynthesis; trehalose biosynthesis. In terms of biological role, removes the phosphate from trehalose 6-phosphate to produce free trehalose. Trehalose accumulation in plant may improve abiotic stress tolerance. The chain is Probable trehalose-phosphate phosphatase 9 (TPP9) from Oryza sativa subsp. japonica (Rice).